Here is a 297-residue protein sequence, read N- to C-terminus: N-acetylmuramic acid 6-phosphate etherase (297 aa).

Positions 55-218 (AAAALKSGGR…STGAMVKFGK (164 aa)) constitute an SIS domain. Glutamate 83 serves as the catalytic Proton donor. Glutamate 114 is an active-site residue.

It belongs to the GCKR-like family. MurNAc-6-P etherase subfamily. Homodimer.

It carries out the reaction N-acetyl-D-muramate 6-phosphate + H2O = N-acetyl-D-glucosamine 6-phosphate + (R)-lactate. It participates in amino-sugar metabolism; 1,6-anhydro-N-acetylmuramate degradation. It functions in the pathway amino-sugar metabolism; N-acetylmuramate degradation. Its pathway is cell wall biogenesis; peptidoglycan recycling. Its function is as follows. Specifically catalyzes the cleavage of the D-lactyl ether substituent of MurNAc 6-phosphate, producing GlcNAc 6-phosphate and D-lactate. Together with AnmK, is also required for the utilization of anhydro-N-acetylmuramic acid (anhMurNAc) either imported from the medium or derived from its own cell wall murein, and thus plays a role in cell wall recycling. In Salmonella schwarzengrund (strain CVM19633), this protein is N-acetylmuramic acid 6-phosphate etherase.